Here is a 133-residue protein sequence, read N- to C-terminus: Small ribosomal subunit protein uS8 (133 aa).

The protein belongs to the universal ribosomal protein uS8 family. Part of the 30S ribosomal subunit. Contacts proteins S5 and S12.

Functionally, one of the primary rRNA binding proteins, it binds directly to 16S rRNA central domain where it helps coordinate assembly of the platform of the 30S subunit. This is Small ribosomal subunit protein uS8 from Synechococcus sp. (strain WH7803).